A 189-amino-acid chain; its full sequence is UPF0312 protein VC_A0539 (189 aa).

A signal peptide spans methionine 1–alanine 22.

The protein belongs to the UPF0312 family. Type 1 subfamily.

It is found in the periplasm. In Vibrio cholerae serotype O1 (strain ATCC 39315 / El Tor Inaba N16961), this protein is UPF0312 protein VC_A0539.